The sequence spans 831 residues: G-type lectin S-receptor-like serine/threonine-protein kinase At1g61390 (831 aa).

The first 42 residues, 1 to 42 (MYKLPQRNCADKQEYTVHMRKMGMVIFACLLLLIIFPTFGYA), serve as a signal peptide directing secretion. One can recognise a Bulb-type lectin domain in the interval 43-162 (DINTSSPLSI…VSGKTLWKSF (120 aa)). Topologically, residues 43–448 (DINTSSPLSI…SSELAGSNRT (406 aa)) are extracellular. N-linked (GlcNAc...) asparagine glycosylation is found at asparagine 45, asparagine 71, asparagine 106, and asparagine 112. Residues 298-334 (PTSSCDLYRACGPFGLCVRSRNPKCICLKGFVPKSDD) form the EGF-like; atypical domain. Cystine bridges form between cysteine 302/cysteine 314 and cysteine 308/cysteine 322. N-linked (GlcNAc...) asparagine glycosylation is found at asparagine 340, asparagine 356, asparagine 399, and asparagine 446. Residues 353–439 (CHTNSSTKTQ…GESLSLRLAS (87 aa)) form the PAN domain. Intrachain disulfides connect cysteine 392–cysteine 413 and cysteine 396–cysteine 402. The chain crosses the membrane as a helical span at residues 449-469 (KIILGTTVSLSIFVILVFAAY). The Cytoplasmic portion of the chain corresponds to 470-831 (KSWRYRTKQN…EITQSVIQGR (362 aa)). The region spanning 520-803 (FSSSNKLGQG…ELPSPKQPTF (284 aa)) is the Protein kinase domain. Residues 526–534 (LGQGGFGPV) and lysine 548 contribute to the ATP site. Phosphoserine occurs at positions 554 and 569. Positions 609–626 (TLKFEIDWQKRFNIIQGV) are caM-binding. Aspartate 645 (proton acceptor) is an active-site residue. Residues serine 649 and serine 662 each carry the phosphoserine modification. Threonine 679 is modified (phosphothreonine). 2 positions are modified to phosphoserine: serine 722 and serine 814.

Belongs to the protein kinase superfamily. Ser/Thr protein kinase family.

The protein resides in the cell membrane. The enzyme catalyses L-seryl-[protein] + ATP = O-phospho-L-seryl-[protein] + ADP + H(+). It carries out the reaction L-threonyl-[protein] + ATP = O-phospho-L-threonyl-[protein] + ADP + H(+). The polypeptide is G-type lectin S-receptor-like serine/threonine-protein kinase At1g61390 (Arabidopsis thaliana (Mouse-ear cress)).